Reading from the N-terminus, the 358-residue chain is Heme A synthase (358 aa).

A run of 8 helical transmembrane segments spans residues 25 to 45 (LVRYWLYAVFAVLIAIVMVGG), 111 to 131 (LLARFVGFLVAVPLGFFWLTG), 141 to 161 (MLGLLALGGLQGAIGWWMVAS), 176 to 196 (IHLTTACVIITAVFYIARGLV), 210 to 230 (FAGWIVFAVLVQIYLGGLVAG), 269 to 289 (VQFVHRMFAYTVLLLAILHAV), 304 to 324 (TIVLVGLVFIQAMIGIATLLM), and 326 to 346 (APLHLGLTHQFFALVVLAFAV). H273 is a binding site for heme. H334 is a binding site for heme.

It belongs to the COX15/CtaA family. Type 2 subfamily. In terms of assembly, interacts with CtaB. The cofactor is heme b.

The protein resides in the cell membrane. The catalysed reaction is Fe(II)-heme o + 2 A + H2O = Fe(II)-heme a + 2 AH2. It functions in the pathway porphyrin-containing compound metabolism; heme A biosynthesis; heme A from heme O: step 1/1. In terms of biological role, catalyzes the conversion of heme O to heme A by two successive hydroxylations of the methyl group at C8. The first hydroxylation forms heme I, the second hydroxylation results in an unstable dihydroxymethyl group, which spontaneously dehydrates, resulting in the formyl group of heme A. This is Heme A synthase from Brucella abortus (strain S19).